A 93-amino-acid chain; its full sequence is Small ribosomal subunit protein uS19 (93 aa).

It belongs to the universal ribosomal protein uS19 family.

Protein S19 forms a complex with S13 that binds strongly to the 16S ribosomal RNA. The polypeptide is Small ribosomal subunit protein uS19 (Thermoanaerobacter pseudethanolicus (strain ATCC 33223 / 39E) (Clostridium thermohydrosulfuricum)).